A 445-amino-acid chain; its full sequence is MSTMTDVGVPETSRPSNAKPWYKVLYIQVLIAIVLGVLVGWLSPHLATNPWIKALGDGFVKLIKMVIAPIIFCTVVSGIAHIQDARKVGRVGIKALVYFEVVSSFALILGLVVGNLLPVGHGLAAKPDAGAVAKYVDQASHMHAVDFFLNIIPESVVGAFAKGDILQVLLFAILFGFALMALGERGHRLRDVIDDTAHAVFGVIAIVMKAAPVGAFGAMAFTIGKYGPAALGNLIGLVALFYATAALFVFVVLGVIAKFVGFNIFKFLGYIKDELLIVLGTSSSESALPQLMEKLERLGCSKSVVGLVVPTGYSFNLDGTNIYMTLATLFIAQALGIELSFSEQVTILLVAMLTSKGASGVTGAGFVTLAGTLAAVNPALVPGMAIVFSIDKFMSEVRALTNITGNGVATVFVSWWEGELDHDRLHANLDKTIDPSDVETAVTTG.

The next 8 helical transmembrane spans lie at 24 to 44 (VLYI…WLSP), 62 to 82 (LIKM…IAHI), 105 to 125 (FALI…GLAA), 163 to 183 (GDIL…MALG), 201 to 221 (FGVI…AMAF), 237 to 257 (LVAL…GVIA), 322 to 342 (IYMT…LSFS), and 370 to 390 (AGTL…VFSI).

This sequence belongs to the dicarboxylate/amino acid:cation symporter (DAACS) (TC 2.A.23) family.

Its subcellular location is the cell inner membrane. Responsible for the transport of dicarboxylates such as succinate, fumarate, and malate from the periplasm across the membrane. The chain is C4-dicarboxylate transport protein from Rhodopseudomonas palustris (strain HaA2).